Reading from the N-terminus, the 168-residue chain is Probable acetolactate synthase small subunit (168 aa).

Positions 10–84 (IISALVEHKP…DVIKVRDLEP (75 aa)) constitute an ACT domain.

It belongs to the acetolactate synthase small subunit family. In terms of assembly, dimer of large and small chains.

The enzyme catalyses 2 pyruvate + H(+) = (2S)-2-acetolactate + CO2. The protein operates within amino-acid biosynthesis; L-isoleucine biosynthesis; L-isoleucine from 2-oxobutanoate: step 1/4. It participates in amino-acid biosynthesis; L-valine biosynthesis; L-valine from pyruvate: step 1/4. The polypeptide is Probable acetolactate synthase small subunit (ilvH) (Methanothermobacter thermautotrophicus (strain ATCC 29096 / DSM 1053 / JCM 10044 / NBRC 100330 / Delta H) (Methanobacterium thermoautotrophicum)).